We begin with the raw amino-acid sequence, 159 residues long: 6,7-dimethyl-8-ribityllumazine synthase (159 aa).

Residues Phe22, 57–59 (TYE), and 81–83 (TII) each bind 5-amino-6-(D-ribitylamino)uracil. A (2S)-2-hydroxy-3-oxobutyl phosphate-binding site is contributed by 86 to 87 (ST). His89 functions as the Proton donor in the catalytic mechanism. Position 114 (Met114) interacts with 5-amino-6-(D-ribitylamino)uracil. Arg128 is a (2S)-2-hydroxy-3-oxobutyl phosphate binding site.

Belongs to the DMRL synthase family. In terms of assembly, forms an icosahedral capsid composed of 60 subunits, arranged as a dodecamer of pentamers.

It carries out the reaction (2S)-2-hydroxy-3-oxobutyl phosphate + 5-amino-6-(D-ribitylamino)uracil = 6,7-dimethyl-8-(1-D-ribityl)lumazine + phosphate + 2 H2O + H(+). It functions in the pathway cofactor biosynthesis; riboflavin biosynthesis; riboflavin from 2-hydroxy-3-oxobutyl phosphate and 5-amino-6-(D-ribitylamino)uracil: step 1/2. Catalyzes the formation of 6,7-dimethyl-8-ribityllumazine by condensation of 5-amino-6-(D-ribitylamino)uracil with 3,4-dihydroxy-2-butanone 4-phosphate. This is the penultimate step in the biosynthesis of riboflavin. The sequence is that of 6,7-dimethyl-8-ribityllumazine synthase from Buchnera aphidicola subsp. Schizaphis graminum (strain Sg).